We begin with the raw amino-acid sequence, 395 residues long: Putative nickel insertion protein (395 aa).

This sequence belongs to the LarC family.

The chain is Putative nickel insertion protein from Roseiflexus castenholzii (strain DSM 13941 / HLO8).